The primary structure comprises 417 residues: Serine hydroxymethyltransferase (417 aa).

(6S)-5,6,7,8-tetrahydrofolate contacts are provided by residues L121 and 125–127 (GHL). The residue at position 229 (K229) is an N6-(pyridoxal phosphate)lysine. 355–357 (SPF) lines the (6S)-5,6,7,8-tetrahydrofolate pocket.

Belongs to the SHMT family. In terms of assembly, homodimer. Pyridoxal 5'-phosphate is required as a cofactor.

The protein localises to the cytoplasm. The catalysed reaction is (6R)-5,10-methylene-5,6,7,8-tetrahydrofolate + glycine + H2O = (6S)-5,6,7,8-tetrahydrofolate + L-serine. It functions in the pathway one-carbon metabolism; tetrahydrofolate interconversion. The protein operates within amino-acid biosynthesis; glycine biosynthesis; glycine from L-serine: step 1/1. In terms of biological role, catalyzes the reversible interconversion of serine and glycine with tetrahydrofolate (THF) serving as the one-carbon carrier. This reaction serves as the major source of one-carbon groups required for the biosynthesis of purines, thymidylate, methionine, and other important biomolecules. Also exhibits THF-independent aldolase activity toward beta-hydroxyamino acids, producing glycine and aldehydes, via a retro-aldol mechanism. The chain is Serine hydroxymethyltransferase from Xanthomonas campestris pv. campestris (strain 8004).